A 236-amino-acid polypeptide reads, in one-letter code: 2,3,4,5-tetrahydropyridine-2,6-dicarboxylate N-acetyltransferase (236 aa).

Belongs to the transferase hexapeptide repeat family. DapH subfamily.

The enzyme catalyses (S)-2,3,4,5-tetrahydrodipicolinate + acetyl-CoA + H2O = L-2-acetamido-6-oxoheptanedioate + CoA. The protein operates within amino-acid biosynthesis; L-lysine biosynthesis via DAP pathway; LL-2,6-diaminopimelate from (S)-tetrahydrodipicolinate (acetylase route): step 1/3. In terms of biological role, catalyzes the transfer of an acetyl group from acetyl-CoA to tetrahydrodipicolinate. The chain is 2,3,4,5-tetrahydropyridine-2,6-dicarboxylate N-acetyltransferase from Clostridium botulinum (strain Langeland / NCTC 10281 / Type F).